A 957-amino-acid polypeptide reads, in one-letter code: Valine--tRNA ligase (957 aa).

Residues 45–55 (PNVTGSLHMGH) carry the 'HIGH' region motif. Residues 571–575 (KMSKS) carry the 'KMSKS' region motif. Lysine 574 serves as a coordination point for ATP. Residues 887-946 (VVDFAAEQARLEKELGKAEADIKRAEAKLANEKFVANAAEEVVEEEREKREAAVARKVKI) adopt a coiled-coil conformation.

This sequence belongs to the class-I aminoacyl-tRNA synthetase family. ValS type 1 subfamily. As to quaternary structure, monomer.

Its subcellular location is the cytoplasm. The catalysed reaction is tRNA(Val) + L-valine + ATP = L-valyl-tRNA(Val) + AMP + diphosphate. Its function is as follows. Catalyzes the attachment of valine to tRNA(Val). As ValRS can inadvertently accommodate and process structurally similar amino acids such as threonine, to avoid such errors, it has a 'posttransfer' editing activity that hydrolyzes mischarged Thr-tRNA(Val) in a tRNA-dependent manner. This Rhodopseudomonas palustris (strain ATCC BAA-98 / CGA009) protein is Valine--tRNA ligase.